A 685-amino-acid chain; its full sequence is Transmembrane protein 214 (685 aa).

Disordered regions lie at residues 1-36 and 66-104; these read MAARAAGSGGWEVVKRSRRPGASSGGRGGGGDRRAL and MKRQNKEQVPPPAAESKKPVNKKQPKKVTAVASQNQKQG. Alanine 2 is modified (N-acetylalanine). N-linked (GlcNAc...) asparagine glycans are attached at residues asparagine 267 and asparagine 305. Transmembrane regions (helical) follow at residues 479-499 and 612-632; these read PWARLLLLLLVFAVGFLCHDL and LLLLFYHSVLLPMWHLLLAAL.

The protein belongs to the TMEM214 family. Constitutively interacts with CASP4; required for the localization of procaspase 4 to the ER.

Its subcellular location is the endoplasmic reticulum membrane. Functionally, critical mediator, in cooperation with CASP4, of endoplasmic reticulum-stress induced apoptosis. Required or the activation of CASP4 following endoplasmic reticulum stress. In Rattus norvegicus (Rat), this protein is Transmembrane protein 214 (Tmem214).